The sequence spans 92 residues: MGRSLKKGPFADDHLMKKIEVLNTDDKKQVIKTWSRRSTIFPTFVGHTVAVYDGRKHVPVYITEDMVGHKLGEFAPTRTYRGHAGDDKKTKR.

This sequence belongs to the universal ribosomal protein uS19 family.

In terms of biological role, protein S19 forms a complex with S13 that binds strongly to the 16S ribosomal RNA. In Oceanobacillus iheyensis (strain DSM 14371 / CIP 107618 / JCM 11309 / KCTC 3954 / HTE831), this protein is Small ribosomal subunit protein uS19.